A 139-amino-acid polypeptide reads, in one-letter code: Protein Turandot B (139 aa).

The signal sequence occupies residues 1-21 (MNFKTALICFALLLIGTLCSA).

It belongs to the Turandot family.

The protein localises to the secreted. A humoral factor that may play a role in stress tolerance. The sequence is that of Protein Turandot B from Drosophila simulans (Fruit fly).